We begin with the raw amino-acid sequence, 406 residues long: Ubiquitin-associated domain-containing protein 1 (406 aa).

In terms of domain architecture, Ubiquitin-like spans 14-98 (LRLHICSLDG…LLLVKKRAPP (85 aa)). The tract at residues 95-122 (RAPPPTPKMAEVSADEKRKQDQKAPDKD) is disordered. Over residues 108 to 122 (ADEKRKQDQKAPDKD) the composition is skewed to basic and acidic residues. One can recognise a UBA 1 domain in the interval 186 to 231 (EDDEDRVDEVALRQLTEMGFPESRAVKALRLNHMSVTQAMEWLIEH). Residues 238–257 (DAPLPCENSSEAAGGLATGE) show a composition bias toward low complexity. The disordered stretch occupies residues 238–272 (DAPLPCENSSEAAGGLATGEAETKPTLGAGAEDPK). The UBA 2 domain maps to 289–329 (RPDPRAVIALMEMGFDEKEVIDALRVNNNQQDAACEWLLGD). Positions 354 to 393 (NPVVQLGLTNPKTLLAFEDMLENPLNSTQWMNDPETGPVM) constitute an STI1 domain.

In terms of assembly, component of the KPC complex.

The protein resides in the cytoplasm. It functions in the pathway protein modification; protein ubiquitination. Non-catalytic component of the KPC complex, a E3 ubiquitin-protein ligase complex that mediates polyubiquitination of target proteins, such as CDKN1B and NFKB1. Within the KPC complex, UBAC1 acts as an adapter that promotes the transfer of target proteins that have been polyubiquitinated by RNF123/KPC1 to the 26S proteasome. In Xenopus tropicalis (Western clawed frog), this protein is Ubiquitin-associated domain-containing protein 1 (ubac1).